A 154-amino-acid polypeptide reads, in one-letter code: Prefoldin subunit 2 (154 aa).

Disordered regions lie at residues 1-20 (MADS…GKGA) and 126-154 (LMGE…VLVS). Over residues 9 to 18 (GKSGGSGAGK) the composition is skewed to gly residues. Over residues 126 to 139 (LMGEDEKPAAKENS) the composition is skewed to basic and acidic residues. Residues 140–154 (EGAGAKASSAGVLVS) are compositionally biased toward low complexity.

Belongs to the prefoldin subunit beta family. In terms of assembly, heterohexamer of two PFD-alpha type and four PFD-beta type subunits. Component of the PAQosome complex which is responsible for the biogenesis of several protein complexes and which consists of R2TP complex members RUVBL1, RUVBL2, RPAP3 and PIH1D1, URI complex members PFDN2, PFDN6, PDRG1, UXT and URI1 as well as ASDURF, POLR2E and DNAAF10/WDR92. Interacts with URI1; the interaction is phosphorylation-dependent and occurs in a growth-dependent manner.

It localises to the nucleus. It is found in the cytoplasm. The protein resides in the mitochondrion. Its function is as follows. Binds specifically to cytosolic chaperonin (c-CPN) and transfers target proteins to it. Binds to nascent polypeptide chain and promotes folding in an environment in which there are many competing pathways for nonnative proteins. This is Prefoldin subunit 2 (Pfdn2) from Mus musculus (Mouse).